The chain runs to 255 residues: MLVMAGLGLYDERDVTLKTLDFAKKVDKIYAEFYTAILTGTTMEKVEETLQKPITVLDREKVEYETNKLIEEAKDKDIMFLTAGDPMVATTHVDIAVEARKKGIEVVIINAPSIYSAIGITGLQLYKFGKTTSIVFPEPNYFPETPYDVIKDNLKLGYHTLCLLDIQADKERFMTANEGLSALLEIEEKRNENVISGETHAAVVARAGSTKPGLYYGKIKDLINYDFGTPLHCVIIPGKLHFMEEDALKYLFENI.

Residues L9, D85, V88, 113 to 114 (SI), L164, A207, and H232 contribute to the S-adenosyl-L-methionine site.

Belongs to the diphthine synthase family. In terms of assembly, homodimer.

It carries out the reaction 2-[(3S)-amino-3-carboxypropyl]-L-histidyl-[translation elongation factor 2] + 3 S-adenosyl-L-methionine = diphthine-[translation elongation factor 2] + 3 S-adenosyl-L-homocysteine + 3 H(+). It participates in protein modification; peptidyl-diphthamide biosynthesis. S-adenosyl-L-methionine-dependent methyltransferase that catalyzes the trimethylation of the amino group of the modified target histidine residue in translation elongation factor 2 (EF-2), to form an intermediate called diphthine. The three successive methylation reactions represent the second step of diphthamide biosynthesis. The polypeptide is Diphthine synthase (Methanococcus maripaludis (strain C5 / ATCC BAA-1333)).